The chain runs to 226 residues: uncharacterized protein (226 aa).

Residues 121 to 141 (YLIGNIIGLPLTIPFILIPLI) traverse the membrane as a helical segment.

This sequence to yeast YDL183c.

The protein localises to the membrane. This is an uncharacterized protein from Schizosaccharomyces pombe (strain 972 / ATCC 24843) (Fission yeast).